Here is a 430-residue protein sequence, read N- to C-terminus: Serine hydroxymethyltransferase (430 aa).

Residue 120–122 participates in (6S)-5,6,7,8-tetrahydrofolate binding; it reads GHI. N6-(pyridoxal phosphate)lysine is present on lysine 226.

The protein belongs to the SHMT family. In terms of assembly, homodimer. Pyridoxal 5'-phosphate serves as cofactor.

The protein localises to the cytoplasm. Its pathway is amino-acid biosynthesis; glycine biosynthesis; glycine from L-serine: step 1/1. Its function is as follows. Catalyzes the reversible interconversion of serine and glycine with a modified folate serving as the one-carbon carrier. Also exhibits a pteridine-independent aldolase activity toward beta-hydroxyamino acids, producing glycine and aldehydes, via a retro-aldol mechanism. This Pyrobaculum neutrophilum (strain DSM 2338 / JCM 9278 / NBRC 100436 / V24Sta) (Thermoproteus neutrophilus) protein is Serine hydroxymethyltransferase.